We begin with the raw amino-acid sequence, 972 residues long: Translation initiation factor IF-2 (972 aa).

The span at 48–63 shows a compositional bias: basic and acidic residues; it reads DHLRKSHGATDGDKRK. Disordered regions lie at residues 48-85 and 99-385; these read DHLR…KART and RDDV…QAPT. A compositionally biased stretch (low complexity) spans 105 to 114; sequence GAEQGQAQVA. Positions 121–181 are enriched in basic and acidic residues; it reads ELKRREEEAR…EEEAAAKRVA (61 aa). A compositionally biased stretch (low complexity) spans 182 to 205; it reads AEAAAAQQQAAAQQAAAAEQQEAA. The span at 212-263 shows a compositional bias: basic and acidic residues; sequence DEARAAAERAAQREAAKKAEDAAREAADKARAEQEEISKRRAAAEAEARAIR. Over residues 279 to 288 the composition is skewed to pro residues; it reads PPKPVEPPKP. Residues 313-328 are compositionally biased toward low complexity; the sequence is PAGAAAPATTAPAGAG. The span at 357–370 shows a compositional bias: gly residues; that stretch reads SSGGVDRGWRGGPK. Residues 472-641 enclose the tr-type G domain; the sequence is PRPPVVTVMG…LLQAEVLELK (170 aa). The tract at residues 481–488 is G1; sequence GHVDHGKT. 481 to 488 provides a ligand contact to GTP; that stretch reads GHVDHGKT. The tract at residues 506-510 is G2; sequence GITQH. The tract at residues 527–530 is G3; sequence DTPG. Residues 527-531 and 581-584 contribute to the GTP site; these read DTPGH and NKID. The interval 581–584 is G4; it reads NKID. The segment at 617–619 is G5; sequence SAK.

Belongs to the TRAFAC class translation factor GTPase superfamily. Classic translation factor GTPase family. IF-2 subfamily.

The protein localises to the cytoplasm. Functionally, one of the essential components for the initiation of protein synthesis. Protects formylmethionyl-tRNA from spontaneous hydrolysis and promotes its binding to the 30S ribosomal subunits. Also involved in the hydrolysis of GTP during the formation of the 70S ribosomal complex. This is Translation initiation factor IF-2 from Burkholderia lata (strain ATCC 17760 / DSM 23089 / LMG 22485 / NCIMB 9086 / R18194 / 383).